We begin with the raw amino-acid sequence, 87 residues long: DNA-directed RNA polymerase subunit omega (87 aa).

The protein belongs to the RNA polymerase subunit omega family. In terms of assembly, the RNAP catalytic core consists of 2 alpha, 1 beta, 1 beta' and 1 omega subunit. When a sigma factor is associated with the core the holoenzyme is formed, which can initiate transcription.

It catalyses the reaction RNA(n) + a ribonucleoside 5'-triphosphate = RNA(n+1) + diphosphate. Its function is as follows. Promotes RNA polymerase assembly. Latches the N- and C-terminal regions of the beta' subunit thereby facilitating its interaction with the beta and alpha subunits. The protein is DNA-directed RNA polymerase subunit omega of Pseudomonas fluorescens (strain SBW25).